A 938-amino-acid chain; its full sequence is Glutamate receptor ionotropic, NMDA 1 (938 aa).

A signal peptide spans 1-18 (MSTMHLLTFALLFSCSFA). Residues 19 to 559 (RAACDPKIVN…TLDSFMQPFQ (541 aa)) lie on the Extracellular side of the membrane. 10 N-linked (GlcNAc...) asparagine glycosylation sites follow: N61, N203, N239, N276, N300, N350, N368, N440, N471, and N491. The cysteines at positions 79 and 308 are disulfide-linked. Intrachain disulfides connect C420/C454 and C436/C455. Glycine contacts are provided by P516, T518, and R523. The chain crosses the membrane as a helical span at residues 560-580 (STLWLLVGLSVHVVAVMLYLL). The Cytoplasmic segment spans residues 581 to 602 (DRFSPFGRFKVNSEEEEEDALT). Residues 603–624 (LSSAMWFSWGVLLNSGIGEGAP) constitute an intramembrane region (discontinuously helical). The segment at 603–624 (LSSAMWFSWGVLLNSGIGEGAP) is pore-forming. The Cytoplasmic segment spans residues 625–630 (RSFSAR). The helical transmembrane segment at 631–647 (ILGMVWAGFAMIIVASY) threads the bilayer. Residues 648 to 812 (TANLAAFLVL…NAPATLTFEN (165 aa)) are Extracellular-facing. Residue N674 is glycosylated (N-linked (GlcNAc...) asparagine). Glycine-binding residues include S688 and D732. A disulfide bond links C744 and C798. N771 carries N-linked (GlcNAc...) asparagine glycosylation. Residues 813–833 (MAGVFMLVAGGIVAGIFLIFI) form a helical membrane-spanning segment. Residues 834 to 938 (EIAYKRHKDA…LQLCSRHRES (105 aa)) lie on the Cytoplasmic side of the membrane. At K877 the chain carries Phosphoserine. A phosphoserine; by PKC mark is found at S889, S890, S896, and S897. Positions 889–938 (SSFKRRRSSKDTSTGGGRGALQNQKDTVLPRRAIEREEGQLQLCSRHRES) are disordered. K898 carries the phosphoserine modification. The span at 916-927 (VLPRRAIEREEG) shows a compositional bias: basic and acidic residues.

Belongs to the glutamate-gated ion channel (TC 1.A.10.1) family. NR1/GRIN1 subfamily. Heterotetramer; the NMDAR subunits are modular and harbor tiered domains that function in concert to regulate opening and closing of the cation-selective ion channel pore. Forms heterotetrameric channels composed of two GluN1/zeta subunits (GRIN1), and two identical GluN2/epsilon subunits (GRIN2A, GRIN2B, GRIN2C or GRIN2D) or GluN3 subunits (GRIN3A or GRIN3B) (in vitro). Can also form heterotetrameric channels that contain at least two GluN1 subunits and at least two different GluN2 subunits (or a combination of one GluN2 and one GluN3 subunits) (in vitro). In vivo, the subunit composition may vary in function of the expression levels of the different subunits. Found in a complex with GRIN2A or GRIN2B, GRIN3A and PPP2CB. Found in a complex with GRIN2A or GRIN2B and GRIN3B;. Interacts with SNX27 (via PDZ domain); the interaction is required for recycling to the plasma membrane when endocytosed and prevent degradation in lysosomes. Interacts with DLG4 and MPDZ. Interacts with LRFN1 and LRFN2. Interacts with MYZAP. Found in a complex with DLG4 and PRR7. Found in a complex with GRIN2B and PRR7. Interacts with PRR7; the interaction is reduced following NMDA receptor activity. Post-translationally, NMDA is probably regulated by C-terminal phosphorylation of an isoform of NR1 by PKC. Dephosphorylated on Ser-897 probably by protein phosphatase 2A (PPP2CB). Its phosphorylated state is influenced by the formation of the NMDAR-PPP2CB complex and the NMDAR channel activity. Detected throughout the brain, in brain cortex, cerebellum, thalamus and olfactory bulb.

Its subcellular location is the cell membrane. It is found in the postsynaptic cell membrane. The protein localises to the synaptic cell membrane. The protein resides in the postsynaptic density membrane. It catalyses the reaction Ca(2+)(in) = Ca(2+)(out). It carries out the reaction Na(+)(in) = Na(+)(out). The enzyme catalyses K(+)(in) = K(+)(out). With respect to regulation, NMDA glutamate receptor activity is potentiated by Zn2(+) in a dose-dependent fashion. The potentiating effect of Zn2(+) is at submicromolar concentrations and its inhibitory action is at high micromolar to millimolar concentrations. Excitatory glycine receptors are inhibited by D-serine at 100uM. In terms of biological role, component of N-methyl-D-aspartate (NMDA) receptors (NMDARs) that function as heterotetrameric, ligand-gated cation channels with high calcium permeability and voltage-dependent block by Mg(2+). NMDARs participate in synaptic plasticity for learning and memory formation by contributing to the long-term potentiation (LTP). Channel activation requires binding of the neurotransmitter L-glutamate to the GluN2 subunit, glycine or D-serine binding to the GluN1 subunit, plus membrane depolarization to eliminate channel inhibition by Mg(2+). NMDARs mediate simultaneously the potasium efflux and the influx of calcium and sodium. Each GluN2 or GluN3 subunit confers differential attributes to channel properties, including activation, deactivation and desensitization kinetics, pH sensitivity, Ca2(+) permeability, and binding to allosteric modulators. Forms excitatory glycinergic receptor complexes with GluN3 alone which are activated by glycine binding to the GluN1 and GluN3 subunits. This chain is Glutamate receptor ionotropic, NMDA 1, found in Rattus norvegicus (Rat).